The following is a 343-amino-acid chain: Anthranilate phosphoribosyltransferase (343 aa).

5-phospho-alpha-D-ribose 1-diphosphate is bound by residues glycine 84, 87-88, threonine 92, 94-97, 112-120, and serine 124; these read GD, NIST, and KHGNRGVSS. Glycine 84 contacts anthranilate. Mg(2+) is bound at residue serine 96. Asparagine 115 contacts anthranilate. Position 170 (arginine 170) interacts with anthranilate. Mg(2+) is bound by residues aspartate 229 and glutamate 230.

Belongs to the anthranilate phosphoribosyltransferase family. As to quaternary structure, homodimer. The cofactor is Mg(2+).

The enzyme catalyses N-(5-phospho-beta-D-ribosyl)anthranilate + diphosphate = 5-phospho-alpha-D-ribose 1-diphosphate + anthranilate. It participates in amino-acid biosynthesis; L-tryptophan biosynthesis; L-tryptophan from chorismate: step 2/5. Catalyzes the transfer of the phosphoribosyl group of 5-phosphorylribose-1-pyrophosphate (PRPP) to anthranilate to yield N-(5'-phosphoribosyl)-anthranilate (PRA). This is Anthranilate phosphoribosyltransferase from Burkholderia multivorans (strain ATCC 17616 / 249).